The following is an 88-amino-acid chain: Small ribosomal subunit protein bS20 (88 aa).

Belongs to the bacterial ribosomal protein bS20 family.

Binds directly to 16S ribosomal RNA. The sequence is that of Small ribosomal subunit protein bS20 from Coprothermobacter proteolyticus (strain ATCC 35245 / DSM 5265 / OCM 4 / BT).